A 198-amino-acid polypeptide reads, in one-letter code: NAD(P)H dehydrogenase (quinone) (198 aa).

A Flavodoxin-like domain is found at 4–189 (VLVLYYSMYG…SIARYQGEYV (186 aa)). FMN-binding positions include 10–15 (SMYGHI) and 78–80 (TRF). Y12 lines the NAD(+) pocket. Residue W98 participates in substrate binding. FMN contacts are provided by residues 113 to 118 (STGTGG) and H133.

It belongs to the WrbA family. The cofactor is FMN.

It carries out the reaction a quinone + NADH + H(+) = a quinol + NAD(+). It catalyses the reaction a quinone + NADPH + H(+) = a quinol + NADP(+). This chain is NAD(P)H dehydrogenase (quinone), found in Escherichia fergusonii (strain ATCC 35469 / DSM 13698 / CCUG 18766 / IAM 14443 / JCM 21226 / LMG 7866 / NBRC 102419 / NCTC 12128 / CDC 0568-73).